Reading from the N-terminus, the 426-residue chain is Serine--tRNA ligase (426 aa).

Thr235–Glu237 is a binding site for L-serine. Arg266–Glu268 is an ATP binding site. Glu289 contributes to the L-serine binding site. Glu353–Ser356 serves as a coordination point for ATP. Residue Ser389 coordinates L-serine.

It belongs to the class-II aminoacyl-tRNA synthetase family. Type-1 seryl-tRNA synthetase subfamily. In terms of assembly, homodimer. The tRNA molecule binds across the dimer.

It is found in the cytoplasm. The catalysed reaction is tRNA(Ser) + L-serine + ATP = L-seryl-tRNA(Ser) + AMP + diphosphate + H(+). It carries out the reaction tRNA(Sec) + L-serine + ATP = L-seryl-tRNA(Sec) + AMP + diphosphate + H(+). The protein operates within aminoacyl-tRNA biosynthesis; selenocysteinyl-tRNA(Sec) biosynthesis; L-seryl-tRNA(Sec) from L-serine and tRNA(Sec): step 1/1. Functionally, catalyzes the attachment of serine to tRNA(Ser). Is also able to aminoacylate tRNA(Sec) with serine, to form the misacylated tRNA L-seryl-tRNA(Sec), which will be further converted into selenocysteinyl-tRNA(Sec). This Nostoc sp. (strain PCC 7120 / SAG 25.82 / UTEX 2576) protein is Serine--tRNA ligase.